The chain runs to 111 residues: UPF0060 membrane protein HCH_03337 (111 aa).

The next 4 membrane-spanning stretches (helical) occupy residues 8 to 28 (LLFAVTAITEIVGCYLPWLVI), 33 to 53 (SLWLLVPAALSLAIFAWLLTL), 65 to 85 (YGGMYVVVALIWLHFVEGVGL), and 88 to 108 (FDFLGATMALAGMAIIALQPI).

The protein belongs to the UPF0060 family.

The protein localises to the cell inner membrane. This Hahella chejuensis (strain KCTC 2396) protein is UPF0060 membrane protein HCH_03337.